Reading from the N-terminus, the 248-residue chain is Small ribosomal subunit protein uS5 (248 aa).

The tract at residues Met-1–Asp-87 is disordered. The span at Ser-8–Ser-23 shows a compositional bias: low complexity. Basic and acidic residues predominate over residues Val-57–Asp-87. An S5 DRBM domain is found at Tyr-94 to Val-157.

This sequence belongs to the universal ribosomal protein uS5 family. As to quaternary structure, part of the 30S ribosomal subunit. Contacts proteins S4 and S8.

Its function is as follows. With S4 and S12 plays an important role in translational accuracy. In terms of biological role, located at the back of the 30S subunit body where it stabilizes the conformation of the head with respect to the body. In Mycoplasmopsis synoviae (strain 53) (Mycoplasma synoviae), this protein is Small ribosomal subunit protein uS5.